Reading from the N-terminus, the 3421-residue chain is Large tegument protein deneddylase (3421 aa).

A deubiquitination activity region spans residues 1-248 (MAQTLVPANK…SETYLSDEQY (248 aa)). Residues 19–238 (VVIGYRNQYD…ISATSLLYGI (220 aa)) enclose the Peptidase C76 domain. Residues C39, D172, and H174 contribute to the active site. A disordered region spans residues 311–351 (QPTEKRVSLPKRRRPPWTPPTSSENLTTSGNTHTVAGRPSQ). The span at 332-344 (SSENLTTSGNTHT) shows a compositional bias: polar residues. The interaction with inner tegument protein stretch occupies residues 482 to 508 (LEQFITMIFNRLLSFLVENGARTRTDS). Disordered stretches follow at residues 2407–2442 (ESNPFPFASHDSSQSLDVPSSPSSGSDKYEEDPTGI) and 2479–3195 (SNAM…RKNI). Low complexity predominate over residues 2415–2432 (SHDSSQSLDVPSSPSSGS). Pro residues-rich tracts occupy residues 2506 to 2516 (TLPPKAAPLPP), 2541 to 2556 (PSVPAPPTLPPAPPLP), 2565 to 2577 (GPPPTLPPAPPLP), 2586 to 2598 (GPPPTLPPAPPLP), and 2607 to 2619 (GPPPTLPPAPPLP). Polar residues-rich tracts occupy residues 2620 to 2637 (QSTSKAASGATQSDSGKT) and 2778 to 2787 (SDSNVTQSTK). The segment covering 2797 to 2857 (PAAAPAKSAA…SAAAPAAAPA (61 aa)) has biased composition (low complexity). Basic and acidic residues predominate over residues 2869–2895 (KPAKDQAKDQAKDQAKDQAKDQAKDQA). A compositionally biased stretch (polar residues) spans 2953-2969 (LSASKNSHTTDAVSSDR). 2 stretches are compositionally biased toward basic and acidic residues: residues 3023-3040 (RKSDSRNNRQSDAWRRAF) and 3088-3097 (CSEEPKRPTG). Residues 3120 to 3146 (IPQNQNTSESPRTTSLKSPTRTVQSSM) are compositionally biased toward polar residues. Over residues 3171-3188 (PQPPPANQTPPPQEPPAP) the composition is skewed to pro residues.

It belongs to the herpesviridae large tegument protein family. In terms of assembly, interacts with host CUL1 and CUL4A; these interactions inhibit the E3 ligase activity of cullins. Interacts with inner tegument protein. Interacts with capsid vertex specific component CVC2. Interacts with the major capsid protein/MCP.

The protein localises to the virion tegument. Its subcellular location is the host cytoplasm. It localises to the host nucleus. The catalysed reaction is Thiol-dependent hydrolysis of ester, thioester, amide, peptide and isopeptide bonds formed by the C-terminal Gly of ubiquitin (a 76-residue protein attached to proteins as an intracellular targeting signal).. In terms of biological role, large tegument protein that plays multiple roles in the viral cycle. During viral entry, remains associated with the capsid while most of the tegument is detached and participates in the capsid transport toward the host nucleus. Plays a role in the routing of the capsid at the nuclear pore complex and subsequent uncoating. Within the host nucleus, acts as a deneddylase and promotes the degradation of nuclear CRLs (cullin-RING ubiquitin ligases) and thereby stabilizes nuclear CRL substrates, while cytoplasmic CRLs remain unaffected. These modifications prevent host cell cycle S-phase progression and create a favorable environment allowing efficient viral genome replication. Participates later in the secondary envelopment of capsids. Indeed, plays a linker role for the association of the outer viral tegument to the capsids together with the inner tegument protein. This chain is Large tegument protein deneddylase, found in Equus caballus (Horse).